The chain runs to 339 residues: Ketol-acid reductoisomerase (NADP(+)) (339 aa).

Residues 1–182 form the KARI N-terminal Rossmann domain; sequence MRVYYDRDAD…GGGRAGIIET (182 aa). NADP(+) is bound by residues 24–27, arginine 48, serine 51, serine 53, and 83–86; these read YGSQ and DELQ. The active site involves histidine 108. Glycine 134 contributes to the NADP(+) binding site. The KARI C-terminal knotted domain occupies 183–328; the sequence is TFKEECETDL…ERLRGMMPWI (146 aa). Aspartate 191, glutamate 195, glutamate 227, and glutamate 231 together coordinate Mg(2+). Residue serine 252 participates in substrate binding.

The protein belongs to the ketol-acid reductoisomerase family. Requires Mg(2+) as cofactor.

The catalysed reaction is (2R)-2,3-dihydroxy-3-methylbutanoate + NADP(+) = (2S)-2-acetolactate + NADPH + H(+). The enzyme catalyses (2R,3R)-2,3-dihydroxy-3-methylpentanoate + NADP(+) = (S)-2-ethyl-2-hydroxy-3-oxobutanoate + NADPH + H(+). It functions in the pathway amino-acid biosynthesis; L-isoleucine biosynthesis; L-isoleucine from 2-oxobutanoate: step 2/4. Its pathway is amino-acid biosynthesis; L-valine biosynthesis; L-valine from pyruvate: step 2/4. In terms of biological role, involved in the biosynthesis of branched-chain amino acids (BCAA). Catalyzes an alkyl-migration followed by a ketol-acid reduction of (S)-2-acetolactate (S2AL) to yield (R)-2,3-dihydroxy-isovalerate. In the isomerase reaction, S2AL is rearranged via a Mg-dependent methyl migration to produce 3-hydroxy-3-methyl-2-ketobutyrate (HMKB). In the reductase reaction, this 2-ketoacid undergoes a metal-dependent reduction by NADPH to yield (R)-2,3-dihydroxy-isovalerate. The protein is Ketol-acid reductoisomerase (NADP(+)) of Methylobacterium sp. (strain 4-46).